A 184-amino-acid chain; its full sequence is Probable type 3 secretion system regulator AscH (184 aa).

Residues 1 to 25 (MKIEGSDQLGGEQPQRQPLPPESMA) are disordered.

Belongs to the YopR family.

It is found in the secreted. Its function is as follows. May be involved in the regulation of the assembly of the type III secretion system (T3SS), also called injectisome, which is used to inject bacterial effector proteins into eukaryotic host cells. May control the polymerization of the needle. This Aeromonas salmonicida subsp. salmonicida protein is Probable type 3 secretion system regulator AscH.